The following is a 1005-amino-acid chain: MTNSISGYQPTVTTSTSSTTSASGASGSLGASSVSTTANATVTQTANATNSAATSSIQTTGETVVNYTNSASAPNVTVSTSSSSTQATATSNKTSQAVAGKITSPDTSESSETSSTSSSDHIPSDYDDVGSNSGDISNNYDDVGSNNGDISSNYDDAAADYEPIRTTENIYESIGGSRTSGPENTSGGAAAALNSLRGSSYSNYDDAAADYEPIRTTENIYESIGGSRTSGPENTSGGAAAALNSLRGSSYSNYDDAAADYEPIRTTENIYESIGGSRTSGPENTSDGAAAAALNSLRGSSYTTGPRNEGVFGPGPEGLPDMSLPSYDPTNKTSLLTFLSNPHVKSKMLENSGHFVFIDTDRSSFILVPNGNWDQVCSIKVQNGKTKEDLDIKDLENMCAKFCTGFSKFSGDWDSLVEPMVSAKAGVASGGNLPNTVIINNKFKTCVAYGPWNSQEASSGYTPSAWRRGHRVDFGGIFEKANDFNKINWGTQAGPSSEDDGISFSNETPGAGPAAAPSPTPSSIPIINVNVNVGGTNVNIGDTNVNTTNTTPTTQSTDASTDTSDIDDINTNNQTDDINTTDKDSDGAGGVNGDISETESSSGDDSGSVSSSESDKNASVGNDGPAMKDILSAVRKHLDVVYPGENGGSTEGPLPANQTLGDVISDVENKGSAQDTKLSGNTGAGDDDPTTTAAVGNGAEEITLSDTDSGIGDDVSDTASSSGDESGGVSSPSSESNKNTAVGNDGPSGLDILAAVRKHLDKVYPGDNGGSTEGPLQANQTLGDIVQDMETTGTSQETVVSPWKGSTSSTESAGGSGSVQTLLPSPPPTPSTTTLRTGTGATTTSLMMGGPIKADIITTGGGGRIPGGGTLEKLLPRIRAHLDISFDAQGDLVSTEEPQLGSIVNKFRQETGSRGILAFVESAPGKPGSAQVLTGTGGDKGNLFQAAAAVTQALGNVAGKVNLAIQGQKLSSLVNDDGKGSVGRDLFQAAAQTTQVLSALIDTVG.

The segment covering 1-10 (MTNSISGYQP) has biased composition (polar residues). 6 disordered regions span residues 1–36 (MTNS…SVST), 73–155 (APNV…SNYD), 487–521 (INWG…SPTP), 542–626 (DTNV…DGPA), 671–749 (GSAQ…GPSG), and 792–847 (TGTS…TSLM). Low complexity-rich tracts occupy residues 11 to 36 (TVTT…SVST) and 73 to 121 (APNV…SSDH). Residues 130-154 (GSNSGDISNNYDDVGSNNGDISSNY) are compositionally biased toward polar residues. Low complexity-rich tracts occupy residues 542–578 (DTNV…TDDI), 593–612 (GDIS…VSSS), 720–736 (SSSG…SSES), and 831–846 (STTT…TTSL).

Belongs to the chlamydial CPn_0572/CT_456/TC_0741 family. In terms of processing, phosphorylated on a tyrosine on attachment to the host cell. Tyrosine phosphorylation is temporally and spatially associated with recruitment of actin to the site of chlamydial entry. Phosphorylated Tarp seems to remain cytoplasmically exposed on the inclusion membrane at one side of internalized elementary bodies for several hours after entry.

The protein localises to the secreted. Its function is as follows. Appears to initiate or participate in signaling events that regulate the actin recruitment, which ultimately leads to internalization. In Chlamydia trachomatis serovar D (strain ATCC VR-885 / DSM 19411 / UW-3/Cx), this protein is Translocated actin-recruiting phosphoprotein (tarP).